Here is a 152-residue protein sequence, read N- to C-terminus: Superoxide dismutase [Cu-Zn] (152 aa).

The Cu cation site is built by His-45, His-47, and His-62. A disulfide bond links Cys-56 and Cys-145. Positions 62, 70, 79, and 82 each coordinate Zn(2+). Cu cation is bound at residue His-119.

The protein belongs to the Cu-Zn superoxide dismutase family. Homodimer. It depends on Cu cation as a cofactor. Requires Zn(2+) as cofactor.

It localises to the cytoplasm. It carries out the reaction 2 superoxide + 2 H(+) = H2O2 + O2. Destroys radicals which are normally produced within the cells and which are toxic to biological systems. This chain is Superoxide dismutase [Cu-Zn] (SODCC), found in Brassica oleracea var. capitata (Cabbage).